The following is a 325-amino-acid chain: Treponemal membrane protein B (325 aa).

An N-terminal signal peptide occupies residues 1–24 (MKTRNFSLVSALYVLLGVPLFVSA). An EAARKAAE repeat occupies 159–166 (EAARKAAE). Residues 167-189 (ARKLEEQRIAAQKAQEERKRAEE) form an ARKLEEQRIAAQKAQEERKRAEE repeat. The disordered stretch occupies residues 176–224 (AAQKAQEERKRAEEEAARKAAEARKLEEQRIAAQKAQEERKRAEEEAAR). The EAARKAAE repeat unit spans residues 190 to 197 (EAARKAAE). Residues 198–220 (ARKLEEQRIAAQKAQEERKRAEE) form an ARKLEEQRIAAQKAQEERKRAEE repeat. An EAARKAAE repeat occupies 221-228 (EAARKAAE). An EAARKAEE repeat occupies 229-236 (EAARKAEE).

To T.phagedenis TmpB.

The protein resides in the cell outer membrane. Its function is as follows. Tmp may serve as a porin or transport protein for large molecules. The protein is Treponemal membrane protein B (tmpB) of Treponema pallidum (strain Nichols).